We begin with the raw amino-acid sequence, 335 residues long: Pharynx and intestine in excess protein 1 (335 aa).

Lysine 68 is covalently cross-linked (Glycyl lysine isopeptide (Lys-Gly) (interchain with G-Cter in SUMO)). The C3H1-type 1 zinc finger occupies 98–126; that stretch reads EYKTRLCDAFRREGYCPYNDNCTYAHGQD. Residues 130–156 are compositionally biased toward basic and acidic residues; that stretch reads VPRRRQEYYSRDPPRERRDSRSRRDDV. The tract at residues 130 to 188 is disordered; that stretch reads VPRRRQEYYSRDPPRERRDSRSRRDDVDTTINRSSSSASKHHDENRRPSNNHGSSNRRQ. 2 stretches are compositionally biased toward polar residues: residues 158-167 and 177-187; these read TTINRSSSSA and PSNNHGSSNRR. A C3H1-type 2 zinc finger spans residues 184–211; sequence SNRRQICHNFERGNCRYGPRCRFIHVEQ. The segment at 288 to 291 is required for inhibition of Ser-2 phosphorylation; that stretch reads MAPT.

Interacts with hda-1, let-418 and mep-1. Interacts (via C terminus) with cit-1.1 (via C terminus). In terms of processing, sumoylated in adult germ cells.

It is found in the nucleus. The protein resides in the cytoplasm. Its subcellular location is the cytoskeleton. It localises to the microtubule organizing center. The protein localises to the centrosome. It is found in the spindle. The protein resides in the cytoplasmic granule. Its function is as follows. Maternally provided pie-1 is required for germline cell fate determination. Functions as a repressor of RNA polymerase II-dependent gene expression in the developing germline. Required for expression of nos-2 in P4 germline blastomere cells. Inhibits the histone deacetylase activity of hda-1. Represses transcriptional activation of cdk-9 and cit-1.1, which are members of the P-TEFb complex. Acts redundantly with gei-17 to promote piRNA-mediated silencing and fertility in adult germline. Promotes the sumoylation of hda-1 in adult animals but not in embryos thereby regulating its interaction with mep-1. The sequence is that of Pharynx and intestine in excess protein 1 from Caenorhabditis elegans.